The chain runs to 1108 residues: Isoleucine--tRNA ligase (1108 aa).

Residues Pro-53–His-63 carry the 'HIGH' region motif. The 'KMSKS' region motif lies at Lys-654–Arg-658. Lys-657 provides a ligand contact to ATP.

It belongs to the class-I aminoacyl-tRNA synthetase family. IleS type 2 subfamily. As to quaternary structure, monomer. It depends on Zn(2+) as a cofactor.

It localises to the cytoplasm. It carries out the reaction tRNA(Ile) + L-isoleucine + ATP = L-isoleucyl-tRNA(Ile) + AMP + diphosphate. Catalyzes the attachment of isoleucine to tRNA(Ile). As IleRS can inadvertently accommodate and process structurally similar amino acids such as valine, to avoid such errors it has two additional distinct tRNA(Ile)-dependent editing activities. One activity is designated as 'pretransfer' editing and involves the hydrolysis of activated Val-AMP. The other activity is designated 'posttransfer' editing and involves deacylation of mischarged Val-tRNA(Ile). The chain is Isoleucine--tRNA ligase from Rickettsia bellii (strain RML369-C).